Reading from the N-terminus, the 415-residue chain is Serine hydroxymethyltransferase (415 aa).

(6S)-5,6,7,8-tetrahydrofolate is bound by residues Leu-122 and 126–128; that span reads GHL. Lys-230 carries the post-translational modification N6-(pyridoxal phosphate)lysine.

This sequence belongs to the SHMT family. As to quaternary structure, homodimer. Pyridoxal 5'-phosphate serves as cofactor.

The protein localises to the cytoplasm. It carries out the reaction (6R)-5,10-methylene-5,6,7,8-tetrahydrofolate + glycine + H2O = (6S)-5,6,7,8-tetrahydrofolate + L-serine. It functions in the pathway one-carbon metabolism; tetrahydrofolate interconversion. Its pathway is amino-acid biosynthesis; glycine biosynthesis; glycine from L-serine: step 1/1. Catalyzes the reversible interconversion of serine and glycine with tetrahydrofolate (THF) serving as the one-carbon carrier. This reaction serves as the major source of one-carbon groups required for the biosynthesis of purines, thymidylate, methionine, and other important biomolecules. Also exhibits THF-independent aldolase activity toward beta-hydroxyamino acids, producing glycine and aldehydes, via a retro-aldol mechanism. This Ralstonia pickettii (strain 12J) protein is Serine hydroxymethyltransferase.